The primary structure comprises 565 residues: Heme/hemopexin transporter protein HuxB (565 aa).

The first 26 residues, 1–26 (MKMRPRYSVIASAVSLGFVLSKSVMA), serve as a signal peptide directing secretion. Residues 73–150 (FPLTQVQILD…GTVKILLLKG (78 aa)) form the POTRA domain.

Belongs to the TPS (TC 1.B.20) family.

The protein resides in the cell outer membrane. Its function is as follows. Likely functions in the release of soluble HxuA from the cell. In terms of biological role, probable member of a two partner secretion pathway (TPS) in which it mediates the secretion of HuxA. In Haemophilus influenzae, this protein is Heme/hemopexin transporter protein HuxB (hxuB).